We begin with the raw amino-acid sequence, 288 residues long: Bifunctional protein FolD (288 aa).

Residues 166 to 168 (GAS) and Ile-232 contribute to the NADP(+) site.

Belongs to the tetrahydrofolate dehydrogenase/cyclohydrolase family. In terms of assembly, homodimer.

The enzyme catalyses (6R)-5,10-methylene-5,6,7,8-tetrahydrofolate + NADP(+) = (6R)-5,10-methenyltetrahydrofolate + NADPH. The catalysed reaction is (6R)-5,10-methenyltetrahydrofolate + H2O = (6R)-10-formyltetrahydrofolate + H(+). The protein operates within one-carbon metabolism; tetrahydrofolate interconversion. In terms of biological role, catalyzes the oxidation of 5,10-methylenetetrahydrofolate to 5,10-methenyltetrahydrofolate and then the hydrolysis of 5,10-methenyltetrahydrofolate to 10-formyltetrahydrofolate. The polypeptide is Bifunctional protein FolD (Klebsiella pneumoniae (strain 342)).